Reading from the N-terminus, the 426-residue chain is tRNA(Met) cytidine acetate ligase (426 aa).

ATP-binding positions include 7–20 (VVEY…HLFH), Gly-101, Asn-168, and Arg-193.

It belongs to the TmcAL family.

It is found in the cytoplasm. It catalyses the reaction cytidine(34) in elongator tRNA(Met) + acetate + ATP = N(4)-acetylcytidine(34) in elongator tRNA(Met) + AMP + diphosphate. Its function is as follows. Catalyzes the formation of N(4)-acetylcytidine (ac(4)C) at the wobble position of elongator tRNA(Met), using acetate and ATP as substrates. First activates an acetate ion to form acetyladenylate (Ac-AMP) and then transfers the acetyl group to tRNA to form ac(4)C34. This chain is tRNA(Met) cytidine acetate ligase, found in Kosmotoga olearia (strain ATCC BAA-1733 / DSM 21960 / TBF 19.5.1).